A 176-amino-acid chain; its full sequence is MNKDDDKEGMAMFSALIEGIKPIAQDKRHFRTPLKTKQEIELKEQQLHANSYFSDTYQPLLPVQGPMRWLDEGVDSLELKRLRRGDYQPDLLLDLHGYRQSEAKLELAALIQACVKQQSQCCCVMHGYGTGILKQQVPMWLVQHPMVKAFHQAPKEWGGDAALLVLIDIGDQPHRR.

In terms of domain architecture, Smr spans 93-168 (LDLHGYRQSE…GDAALLVLID (76 aa)).

The protein belongs to the SmrB family. Associates with collided ribosomes, but not with correctly translating polysomes.

Its function is as follows. Acts as a ribosome collision sensor. Detects stalled/collided disomes (pairs of ribosomes where the leading ribosome is stalled and a second ribosome has collided with it) and endonucleolytically cleaves mRNA at the 5' boundary of the stalled ribosome. Stalled/collided disomes form a new interface (primarily via the 30S subunits) that binds SmrB. Cleaved mRNA becomes available for tmRNA ligation, leading to ribosomal subunit dissociation and rescue of stalled ribosomes. In Shewanella sp. (strain MR-4), this protein is Ribosome rescue factor SmrB.